Here is a 276-residue protein sequence, read N- to C-terminus: Secreted RxLR effector protein 120 (276 aa).

The N-terminal stretch at 1–21 (MRGAYYVITALLVVASSQTSA) is a signal peptide. The short motif at 48–65 (QSLRGSRDVPDDLAHEER) is the RxLR-dEER element. Residues 97–130 (GKRPRVAEKDALEKASGADEASKKPRNTATDDAF) are disordered. Over residues 101-119 (RVAEKDALEKASGADEASK) the composition is skewed to basic and acidic residues.

The protein belongs to the RxLR effector family.

The protein localises to the secreted. Its subcellular location is the host nucleus. In terms of biological role, secreted effector that completely suppresses the host cell death induced by cell death-inducing proteins. In Plasmopara viticola (Downy mildew of grapevine), this protein is Secreted RxLR effector protein 120.